The chain runs to 334 residues: Glyceraldehyde-3-phosphate dehydrogenase (334 aa).

Residues 12-13 (TI) and G111 contribute to the NAD(+) site. 140–142 (SCN) contacts D-glyceraldehyde 3-phosphate. Catalysis depends on C141, which acts as the Nucleophile. An NAD(+)-binding site is contributed by R167. D-glyceraldehyde 3-phosphate is bound at residue 192-193 (HG). Q298 contributes to the NAD(+) binding site.

This sequence belongs to the glyceraldehyde-3-phosphate dehydrogenase family. In terms of assembly, homotetramer.

The protein localises to the cytoplasm. The catalysed reaction is D-glyceraldehyde 3-phosphate + phosphate + NADP(+) = (2R)-3-phospho-glyceroyl phosphate + NADPH + H(+). The enzyme catalyses D-glyceraldehyde 3-phosphate + phosphate + NAD(+) = (2R)-3-phospho-glyceroyl phosphate + NADH + H(+). It participates in carbohydrate degradation; glycolysis; pyruvate from D-glyceraldehyde 3-phosphate: step 1/5. In Thermococcus kodakarensis (strain ATCC BAA-918 / JCM 12380 / KOD1) (Pyrococcus kodakaraensis (strain KOD1)), this protein is Glyceraldehyde-3-phosphate dehydrogenase.